The following is a 726-amino-acid chain: Germacradienol/geosmin synthase (726 aa).

The interval 2–354 is germacradienol/germacrene D synthase; that stretch reads TQQPFQLPHF…TSAADVGALL (353 aa). The Mg(2+) site is built by Asp-86, Glu-91, Asn-267, Thr-271, Gln-276, Asp-455, Asn-598, Ser-602, and Glu-606. The short motif at 86 to 91 is the DDXXD motif 1; degenerate element; the sequence is DDHFLE. The segment at 355–726 is geosmin synthase; the sequence is ADAVAQRARS…VPRSSPALTH (372 aa). Residues 455-459 carry the DDXXD motif 2; degenerate motif; the sequence is DDYYP.

It belongs to the terpene synthase family. It depends on Mg(2+) as a cofactor.

It catalyses the reaction (2E,6E)-farnesyl diphosphate + H2O = (1E,4S,5E,7R)-germacra-1(10),5-dien-11-ol + diphosphate. It carries out the reaction (1E,4S,5E,7R)-germacra-1(10),5-dien-11-ol + H2O = (-)-geosmin + acetone. The enzyme catalyses (2E,6E)-farnesyl diphosphate = (-)-germacrene D + diphosphate. Its pathway is secondary metabolite biosynthesis; geosmin biosynthesis. It participates in sesquiterpene biosynthesis; germacradienol biosynthesis; germacradienol from farnesyl diphosphate: step 1/1. It functions in the pathway sesquiterpene biosynthesis; germacrene D biosynthesis; germacrene D from farnesyl diphosphate: step 1/1. Tow-domain protein where the N-terminal domain catalyzes the cyclization of farnesyl diphosphate (FPP) to a 85:15 mixture of the sesquiterpene alcohol germacradienol and the sesquiterpene hydrocarbon germacrene D. The C-terminal domain partially converts the germacradienol formed into geosmin, the characteristic odoriferous ('earthy aroma') constituent of Streptomyces species. The protein is Germacradienol/geosmin synthase (cyc2) of Streptomyces coelicolor (strain ATCC BAA-471 / A3(2) / M145).